The sequence spans 238 residues: RNA-free ribonuclease P (238 aa).

This sequence belongs to the HARP family.

It carries out the reaction Endonucleolytic cleavage of RNA, removing 5'-extranucleotides from tRNA precursor.. Its function is as follows. RNA-free RNase P that catalyzes the removal of the 5'-leader sequence from pre-tRNA to produce the mature 5'-terminus. The protein is RNA-free ribonuclease P of Hyperthermus butylicus (strain DSM 5456 / JCM 9403 / PLM1-5).